Reading from the N-terminus, the 246-residue chain is Acetoacetate decarboxylase (246 aa).

The Schiff-base intermediate with acetoacetate role is filled by Lys-116.

This sequence belongs to the ADC family.

It carries out the reaction acetoacetate + H(+) = acetone + CO2. Functionally, catalyzes the conversion of acetoacetate to acetone and carbon dioxide. This chain is Acetoacetate decarboxylase, found in Burkholderia ambifaria (strain MC40-6).